The chain runs to 210 residues: Glutathione S-transferase P (210 aa).

One can recognise a GST N-terminal domain in the interval 2 to 81 (PPYTIVYFPV…HLGRSLGLYG (80 aa)). At Tyr-4 the chain carries Phosphotyrosine; by EGFR. Residues Tyr-8, Arg-14, Trp-39, Lys-45, 52–53 (QL), and 65–66 (QS) each bind glutathione. The GST C-terminal domain maps to 83–204 (DQKEAALVDM…SSPDHVNRPI (122 aa)). Residues Lys-103 and Lys-116 each carry the N6-succinyllysine modification. Lys-128 bears the N6-acetyllysine mark.

Belongs to the GST superfamily. Pi family. As to quaternary structure, homodimer. Interacts with CDK5.

It localises to the cytoplasm. It is found in the mitochondrion. The protein resides in the nucleus. It catalyses the reaction RX + glutathione = an S-substituted glutathione + a halide anion + H(+). The catalysed reaction is prostaglandin J2 + glutathione = prostaglandin J2-S-(R)-glutathione. It carries out the reaction prostaglandin J2 + glutathione = prostaglandin J2-S-(S)-glutathione. The enzyme catalyses prostaglandin A2 + glutathione = prostaglandin A2-S-(S)-glutathione. It catalyses the reaction 11(S)-hydroxy-14(S),15(S)-epoxy-(5Z,8Z,12E)-eicosatrienoate + glutathione = (11S,15S)-dihydroxy-14(R)-S-glutathionyl-(5Z,8Z,12E)-eicosatrienoate. Functionally, conjugation of reduced glutathione to a wide number of exogenous and endogenous hydrophobic electrophiles. Involved in the formation of glutathione conjugates of both prostaglandin A2 (PGA2) and prostaglandin J2 (PGJ2). Participates in the formation of novel hepoxilin regioisomers. Negatively regulates CDK5 activity via p25/p35 translocation to prevent neurodegeneration. In Mesocricetus auratus (Golden hamster), this protein is Glutathione S-transferase P (GSTP1).